A 527-amino-acid chain; its full sequence is MEPNSSGSGKAAVGDGGGGGAPMLQPAPAPAPMPSANAPPPFLVKTYDMVDDPSTDKIVSWSPTNNSFVVWDPPEFAKDLLPKYFKHNNFSSFVRQLNTYGFRKVDPDRWEFANEGFLRGQKHLLKSISRRKPAHGHAQQQQQPHGHAQQQMQPPGHSASVGACVEVGKFGLEEEVERLKRDKNVLMQELVRLRQQQQSTDNQLQGMVQRLQGMELRQQQMMSFLAKAVNSPGFLAQFVQQQNESNKRIAEGSKKRRIKQDIESQDPSVTPADGQIVKYQPGINEAAKAMLRELSKLDSSPRLENFSNSPESFLIGDGSPQSNASSGRVSGVTLQEVPPTSGKPLLNTASAIAGQSLLPATSEMQSSHLGTCSEIINNQLSNIIPLVGGEDLHPGSLSASDMIMPELSQLQGILPENNTDVIGCDSFMDTIAVEGKMGLDIGSLSPGADIDWQSGLLDEIQEFPSVGDPFWEKFLQSPSSPDAAMDDDISNTSETKPQINGWDKTQNMEHLTEQMGATNIKQQKHMI.

Low complexity predominate over residues 1–13 (MEPNSSGSGKAAV). Disordered stretches follow at residues 1–37 (MEPN…PSAN), 130–160 (RRKP…HSAS), 243–275 (NESN…ADGQ), 300–343 (SPRL…TSGK), and 476–501 (QSPS…QING). A compositionally biased stretch (pro residues) spans 25 to 37 (QPAPAPAPMPSAN). Residues 39–133 (PPPFLVKTYD…LLKSISRRKP (95 aa)) mediate DNA binding. The segment covering 136–157 (GHAQQQQQPHGHAQQQMQPPGH) has biased composition (low complexity). 2 stretches are compositionally biased toward polar residues: residues 319-328 (SPQSNASSGR) and 491-501 (NTSETKPQING).

It belongs to the HSF family. Homotrimer. Exhibits temperature-dependent phosphorylation.

It localises to the nucleus. DNA-binding protein that specifically binds heat shock promoter elements (HSE) and activates transcription. The sequence is that of Heat shock factor protein HSF8 (HSF8) from Solanum peruvianum (Peruvian tomato).